The sequence spans 29 residues: Omega-conotoxin MVIIC (29 aa).

Residues threonine 1–arginine 2 constitute a propeptide that is removed on maturation. 3 cysteine pairs are disulfide-bonded: cysteine 3-cysteine 18, cysteine 10-cysteine 22, and cysteine 17-cysteine 28. Position 28 is a cysteine amide (cysteine 28).

This sequence belongs to the conotoxin O1 superfamily. Not hydroxylated; hydroxylation, on a synthetic hydroxylated MVIIC, has a significant impact on the oxidative folding but not on the biological activity. As to expression, expressed by the venom duct.

The protein localises to the secreted. Omega-conotoxins act at presynaptic membranes, they bind and block voltage-gated calcium channels (Cav). This toxin preferentially blocks P/Q-type calcium channels (Cav2.1/CACNA1A) (IC(50)=0.60 nM). Also shows an inhibition on Cav2.2/CACNA1A channels (IC(50)=7.0 nM). The sequence is that of Omega-conotoxin MVIIC from Conus magus (Magical cone).